A 66-amino-acid chain; its full sequence is Large ribosomal subunit protein bL33c (66 aa).

This sequence belongs to the bacterial ribosomal protein bL33 family.

It is found in the plastid. Its subcellular location is the chloroplast. This is Large ribosomal subunit protein bL33c (rpl33) from Arabidopsis thaliana (Mouse-ear cress).